The primary structure comprises 158 residues: Botcinic acid biosynthesis cluster B protein 16 (158 aa).

Its pathway is polyketide biosynthesis. Functionally, part of the gene cluster B that mediates the biosynthesis of botcinic acid and its botcinin derivatives, acetate-derived polyketides that contribute to virulence when combined with the sesquiterpene botrydial. Botcinic acid and its derivatives have been shown to induce chlorosis and necrosis during host plant infection, but also have antifungal activities. Two polyketide synthases, BOA6 and BOA9, are involved in the biosynthesis of botcinins. BOA6 mediates the formation of the per-methylated tetraketide core by condensation of four units of malonyl-CoA with one unit of acetyl-CoA, which would be methylated in activated methylene groups to yield a bicyclic acid intermediate that could then either be converted to botrylactone derivatives or lose the starter acetate unit through a retro-Claisen type C-C bond cleavage to yield botcinin derivatives. The second polyketide synthase, BOA9, is probably required for the biosynthesis of the tetraketide side chain of botcinins. The methyltransferase (MT) domain within BOA6 is probably responsible for the incorporation of four methyl groups. The trans-enoyl reductase BOA5 might take over the enoyl reductase function of BOA6 that misses an ER domain. The monooxygenases BOA2, BOA3 and BOA4 might be involved in further hydroxylations at C4, C5 and C8, whereas BOA7, close to BOA9, could potentially be involved in the hydroxylation at C4 in the side chain of botcinins. This Botryotinia fuckeliana (strain B05.10) (Noble rot fungus) protein is Botcinic acid biosynthesis cluster B protein 16.